A 93-amino-acid polypeptide reads, in one-letter code: Pyrimidine/purine nucleoside phosphorylase (93 aa).

It belongs to the nucleoside phosphorylase PpnP family.

The catalysed reaction is a purine D-ribonucleoside + phosphate = a purine nucleobase + alpha-D-ribose 1-phosphate. The enzyme catalyses adenosine + phosphate = alpha-D-ribose 1-phosphate + adenine. It carries out the reaction cytidine + phosphate = cytosine + alpha-D-ribose 1-phosphate. It catalyses the reaction guanosine + phosphate = alpha-D-ribose 1-phosphate + guanine. The catalysed reaction is inosine + phosphate = alpha-D-ribose 1-phosphate + hypoxanthine. The enzyme catalyses thymidine + phosphate = 2-deoxy-alpha-D-ribose 1-phosphate + thymine. It carries out the reaction uridine + phosphate = alpha-D-ribose 1-phosphate + uracil. It catalyses the reaction xanthosine + phosphate = alpha-D-ribose 1-phosphate + xanthine. Its function is as follows. Catalyzes the phosphorolysis of diverse nucleosides, yielding D-ribose 1-phosphate and the respective free bases. Can use uridine, adenosine, guanosine, cytidine, thymidine, inosine and xanthosine as substrates. Also catalyzes the reverse reactions. This Aliivibrio fischeri (strain ATCC 700601 / ES114) (Vibrio fischeri) protein is Pyrimidine/purine nucleoside phosphorylase.